We begin with the raw amino-acid sequence, 150 residues long: Large ribosomal subunit protein bL9 (150 aa).

It belongs to the bacterial ribosomal protein bL9 family.

Binds to the 23S rRNA. This chain is Large ribosomal subunit protein bL9, found in Shewanella oneidensis (strain ATCC 700550 / JCM 31522 / CIP 106686 / LMG 19005 / NCIMB 14063 / MR-1).